The chain runs to 192 residues: ATP synthase subunit b (192 aa).

A helical transmembrane segment spans residues 7-27; the sequence is LLLVLGVMLLATGVALAAGGE.

The protein belongs to the ATPase B chain family. As to quaternary structure, F-type ATPases have 2 components, F(1) - the catalytic core - and F(0) - the membrane proton channel. F(1) has five subunits: alpha(3), beta(3), gamma(1), delta(1), epsilon(1). F(0) has three main subunits: a(1), b(2) and c(10-14). The alpha and beta chains form an alternating ring which encloses part of the gamma chain. F(1) is attached to F(0) by a central stalk formed by the gamma and epsilon chains, while a peripheral stalk is formed by the delta and b chains.

It localises to the cell inner membrane. In terms of biological role, f(1)F(0) ATP synthase produces ATP from ADP in the presence of a proton or sodium gradient. F-type ATPases consist of two structural domains, F(1) containing the extramembraneous catalytic core and F(0) containing the membrane proton channel, linked together by a central stalk and a peripheral stalk. During catalysis, ATP synthesis in the catalytic domain of F(1) is coupled via a rotary mechanism of the central stalk subunits to proton translocation. Functionally, component of the F(0) channel, it forms part of the peripheral stalk, linking F(1) to F(0). The sequence is that of ATP synthase subunit b from Oleidesulfovibrio alaskensis (strain ATCC BAA-1058 / DSM 17464 / G20) (Desulfovibrio alaskensis).